A 392-amino-acid polypeptide reads, in one-letter code: Formate-dependent phosphoribosylglycinamide formyltransferase (392 aa).

N(1)-(5-phospho-beta-D-ribosyl)glycinamide-binding positions include 22-23 and glutamate 82; that span reads EL. ATP is bound by residues arginine 114, lysine 155, 160-165, 195-198, and glutamate 203; these read SSGKGQ and EGVV. The ATP-grasp domain maps to 119 to 308; sequence RLAAEELQLP…EFALHVRAFL (190 aa). Mg(2+) is bound by residues glutamate 267 and glutamate 279. N(1)-(5-phospho-beta-D-ribosyl)glycinamide-binding positions include aspartate 286, lysine 355, and 362–363; that span reads RR.

The protein belongs to the PurK/PurT family. As to quaternary structure, homodimer.

It catalyses the reaction N(1)-(5-phospho-beta-D-ribosyl)glycinamide + formate + ATP = N(2)-formyl-N(1)-(5-phospho-beta-D-ribosyl)glycinamide + ADP + phosphate + H(+). Its pathway is purine metabolism; IMP biosynthesis via de novo pathway; N(2)-formyl-N(1)-(5-phospho-D-ribosyl)glycinamide from N(1)-(5-phospho-D-ribosyl)glycinamide (formate route): step 1/1. Involved in the de novo purine biosynthesis. Catalyzes the transfer of formate to 5-phospho-ribosyl-glycinamide (GAR), producing 5-phospho-ribosyl-N-formylglycinamide (FGAR). Formate is provided by PurU via hydrolysis of 10-formyl-tetrahydrofolate. The protein is Formate-dependent phosphoribosylglycinamide formyltransferase of Shigella boydii serotype 4 (strain Sb227).